Reading from the N-terminus, the 325-residue chain is Polyprenyl transferase mpaA (325 aa).

Helical transmembrane passes span Met27–Leu47, Val56–Ala76, and Val108–Ile128. An N-linked (GlcNAc...) asparagine glycan is attached at Asn131. The next 6 helical transmembrane spans lie at Ile134–Leu151, Val159–Trp179, Ile192–Thr212, Leu240–Ile260, Ser262–Val282, and Ile295–Gly315.

Belongs to the UbiA prenyltransferase family. Requires Mg(2+) as cofactor.

Its subcellular location is the golgi apparatus membrane. It carries out the reaction 5,7-dihydroxy-4-methylphthalide + (2E,6E)-farnesyl diphosphate = 4-farnesyl-3,5-dihydroxy-6-methylphthalide + diphosphate. It participates in secondary metabolite biosynthesis; terpenoid biosynthesis. In terms of biological role, polyprenyl transferase; part of the gene cluster that mediates the biosynthesis of mycophenolic acid (MPA), the first isolated antibiotic natural product in the world obtained from a culture of Penicillium brevicompactum in 1893. MpaA is a Golgi apparatus-associated enzyme that catalyzes the prenylation of 5,7-dihydroxy-4,6-dimethylphthalide (DHMP) to yield farnesyl-DHMP (FDHMP). The first step of the pathway is the synthesis of 5-methylorsellinic acid (5MOA) by the cytosolic polyketide synthase mpaC. 5MOA is then converted to the phthalide compound 5,7-dihydroxy-4,6-dimethylphthalide (DHMP) by the endoplasmic reticulum-bound cytochrome P450 monooxygenase mpaDE. MpaDE first catalyzes hydroxylation of 5-MOA to 4,6-dihydroxy-2-(hydroxymethyl)-3-methylbenzoic acid (DHMB). MpaDE then acts as a lactone synthase that catalyzes the ring closure to convert DHMB into DHMP. The next step is the prenylation of DHMP by the Golgi apparatus-associated prenyltransferase mpaA to yield farnesyl-DHMP (FDHMP). The ER-bound oxygenase mpaB then mediates the oxidative cleavage the C19-C20 double bond in FDHMP to yield FDHMP-3C via a mycophenolic aldehyde intermediate. The O-methyltransferase mpaG catalyzes the methylation of FDHMP-3C to yield MFDHMP-3C. After the cytosolic methylation of FDHMP-3C, MFDHMP-3C enters into peroxisomes probably via free diffusion due to its low molecular weight. Upon a peroxisomal CoA ligation reaction, catalyzed by a beta-oxidation component enzyme acyl-CoA ligase ACL891, MFDHMP-3C-CoA would then be restricted to peroxisomes for the following beta-oxidation pathway steps. The peroxisomal beta-oxidation machinery than converts MFDHMP-3C-CoA into MPA_CoA, via a beta-oxidation chain-shortening process. Finally mpaH acts as a peroxisomal acyl-CoA hydrolase with high substrate specificity toward MPA-CoA to release the final product MPA. In Penicillium roqueforti (strain FM164), this protein is Polyprenyl transferase mpaA.